Here is a 622-residue protein sequence, read N- to C-terminus: Low affinity potassium transport system protein Kup (622 aa).

Transmembrane regions (helical) follow at residues 9 to 29 (LPAV…TSPL), 49 to 69 (VFGF…LKYL), 101 to 121 (VLVI…VITP), 137 to 157 (PSMD…LFII), 165 to 185 (VGKL…VLGA), 212 to 232 (AVSF…EALY), 247 to 267 (WFTV…ALLL), 279 to 299 (LLAP…ATII), 337 to 357 (IYIP…IVSF), 363 to 383 (LAAA…ILFC), 397 to 417 (AWVL…ANVV), and 419 to 439 (ILSG…IMTT).

Belongs to the HAK/KUP transporter (TC 2.A.72) family.

It is found in the cell inner membrane. The catalysed reaction is K(+)(in) + H(+)(in) = K(+)(out) + H(+)(out). In terms of biological role, responsible for the low-affinity transport of potassium into the cell. Likely operates as a K(+):H(+) symporter. This chain is Low affinity potassium transport system protein Kup, found in Pectobacterium carotovorum subsp. carotovorum (strain PC1).